The sequence spans 239 residues: Phosducin-like protein 2 (239 aa).

Residues 26-87 (TEDELFDLIK…IQQMKVEAEL (62 aa)) adopt a coiled-coil conformation. In terms of domain architecture, Phosducin spans 36–196 (EAAEMATEAE…TTVNDIEWQL (161 aa)). The span at 42-59 (TEAEKNEKLENASLKDLK) shows a compositional bias: basic and acidic residues. 2 disordered regions span residues 42-64 (TEAE…MEDD) and 212-239 (ITLA…DSDD). Residues 90–239 (FGELKEISEP…DESDNSDSDD (150 aa)) form a thioredoxin fold region. The span at 214 to 224 (LARKKSQKSRY) shows a compositional bias: basic residues. Acidic residues predominate over residues 230–239 (DESDNSDSDD).

The protein belongs to the phosducin family.

The sequence is that of Phosducin-like protein 2 (phlp2) from Dictyostelium discoideum (Social amoeba).